The sequence spans 346 residues: 4-hydroxy-3-methylbut-2-enyl diphosphate reductase (346 aa).

[4Fe-4S] cluster is bound at residue Cys19. Residues His48 and His84 each coordinate (2E)-4-hydroxy-3-methylbut-2-enyl diphosphate. Residues His48 and His84 each contribute to the dimethylallyl diphosphate site. Isopentenyl diphosphate-binding residues include His48 and His84. Cys106 lines the [4Fe-4S] cluster pocket. His134 contributes to the (2E)-4-hydroxy-3-methylbut-2-enyl diphosphate binding site. His134 provides a ligand contact to dimethylallyl diphosphate. His134 lines the isopentenyl diphosphate pocket. The active-site Proton donor is Glu136. Residue Thr175 participates in (2E)-4-hydroxy-3-methylbut-2-enyl diphosphate binding. [4Fe-4S] cluster is bound at residue Cys205. Ser233, Ser234, Asn235, and Ser278 together coordinate (2E)-4-hydroxy-3-methylbut-2-enyl diphosphate. Positions 233, 234, 235, and 278 each coordinate dimethylallyl diphosphate. Residues Ser233, Ser234, Asn235, and Ser278 each contribute to the isopentenyl diphosphate site.

It belongs to the IspH family. It depends on [4Fe-4S] cluster as a cofactor.

The catalysed reaction is isopentenyl diphosphate + 2 oxidized [2Fe-2S]-[ferredoxin] + H2O = (2E)-4-hydroxy-3-methylbut-2-enyl diphosphate + 2 reduced [2Fe-2S]-[ferredoxin] + 2 H(+). The enzyme catalyses dimethylallyl diphosphate + 2 oxidized [2Fe-2S]-[ferredoxin] + H2O = (2E)-4-hydroxy-3-methylbut-2-enyl diphosphate + 2 reduced [2Fe-2S]-[ferredoxin] + 2 H(+). It functions in the pathway isoprenoid biosynthesis; dimethylallyl diphosphate biosynthesis; dimethylallyl diphosphate from (2E)-4-hydroxy-3-methylbutenyl diphosphate: step 1/1. Its pathway is isoprenoid biosynthesis; isopentenyl diphosphate biosynthesis via DXP pathway; isopentenyl diphosphate from 1-deoxy-D-xylulose 5-phosphate: step 6/6. Its function is as follows. Catalyzes the conversion of 1-hydroxy-2-methyl-2-(E)-butenyl 4-diphosphate (HMBPP) into a mixture of isopentenyl diphosphate (IPP) and dimethylallyl diphosphate (DMAPP). Acts in the terminal step of the DOXP/MEP pathway for isoprenoid precursor biosynthesis. The polypeptide is 4-hydroxy-3-methylbut-2-enyl diphosphate reductase (Brucella abortus (strain S19)).